Reading from the N-terminus, the 189-residue chain is Interleukin-23 subunit alpha (189 aa).

An N-terminal signal peptide occupies residues 1–19 (MLGSRAVMLLLLLPWTAQG). The cysteines at positions 77 and 89 are disulfide-linked.

Belongs to the IL-6 superfamily. In terms of assembly, heterodimer with IL12B; disulfide-linked. The heterodimer is known as interleukin IL-23. Interacts with IL23R; this interaction enables recruitment of IL12RB1. Secreted by activated dendritic and phagocytic cells and keratinocytes. Also expressed by dermal Langerhans cells (at protein level).

The protein resides in the secreted. In terms of biological role, associates with IL12B to form the pro-inflammatory cytokine IL-23 that plays different roles in innate and adaptive immunity. Released by antigen-presenting cells such as dendritic cells or macrophages, binds to a heterodimeric receptor complex composed of IL12RB1 and IL23R to activate JAK2 and TYK2 which then phosphorylate the receptor to form a docking site leading to the phosphorylation of STAT3 and STAT4. This process leads to activation of several pathways including p38 MAPK or NF-kappa-B and promotes the production of pro-inflammatory cytokines such as interleukin-17A/IL17A. In turn, participates in the early and effective intracellular bacterial clearance. Promotes the expansion and survival of T-helper 17 cells, a CD4-positive helper T-cell subset that produces IL-17, as well as other IL-17-producing cells. This chain is Interleukin-23 subunit alpha (IL23A), found in Homo sapiens (Human).